We begin with the raw amino-acid sequence, 150 residues long: SsrA-binding protein (150 aa).

The tract at residues 129–150 (ETEKQRDWQREKSRIMKGGSKE) is disordered.

This sequence belongs to the SmpB family.

It localises to the cytoplasm. Its function is as follows. Required for rescue of stalled ribosomes mediated by trans-translation. Binds to transfer-messenger RNA (tmRNA), required for stable association of tmRNA with ribosomes. tmRNA and SmpB together mimic tRNA shape, replacing the anticodon stem-loop with SmpB. tmRNA is encoded by the ssrA gene; the 2 termini fold to resemble tRNA(Ala) and it encodes a 'tag peptide', a short internal open reading frame. During trans-translation Ala-aminoacylated tmRNA acts like a tRNA, entering the A-site of stalled ribosomes, displacing the stalled mRNA. The ribosome then switches to translate the ORF on the tmRNA; the nascent peptide is terminated with the 'tag peptide' encoded by the tmRNA and targeted for degradation. The ribosome is freed to recommence translation, which seems to be the essential function of trans-translation. This is SsrA-binding protein from Cupriavidus pinatubonensis (strain JMP 134 / LMG 1197) (Cupriavidus necator (strain JMP 134)).